A 597-amino-acid polypeptide reads, in one-letter code: Gamma-terpinene synthase, chloroplastic (597 aa).

The N-terminal 47 residues, 1–47 (MATLSMQVSILSKQVKNLNSFGMRASKLPMVARRVDVSTTRLRPICS), are a transit peptide targeting the chloroplast. Asp-350 and Asp-354 together coordinate Mn(2+). The DDXXD motif signature appears at 350–354 (DDVYD). Homodimerization stretches follow at residues 356–362 (YGTLDEL) and 428–464 (EAKWYYAGYTPTLAEYLENAKVSISSPTIISQVYFTL). Mn(2+) contacts are provided by Asp-494 and Glu-502.

Belongs to the terpene synthase family. In terms of assembly, homodimer. Mn(2+) is required as a cofactor. Mg(2+) serves as cofactor.

It localises to the plastid. It is found in the chloroplast. It carries out the reaction (2E)-geranyl diphosphate = gamma-terpinene + diphosphate. Its pathway is secondary metabolite biosynthesis; terpenoid biosynthesis. In terms of biological role, involved in the biosynthesis of phenolic monoterpenes natural products thymol and carvacrol which have a broad range of biological activities acting as antimicrobial compounds, insecticides, antioxidants and pharmaceutical agents. Monoterpene synthase which catalyzes the conversion of geranyl diphosphate (GPP) to gamma-terpinene. This Thymus caespititius (Cretan thyme) protein is Gamma-terpinene synthase, chloroplastic.